A 299-amino-acid chain; its full sequence is dTDP-4-dehydrorhamnose reductase (299 aa).

NADH-binding positions include 10-12, D30, 39-40, and 63-65; these read GQV, DF, and AHT. 11–12 lines the NADPH pocket; the sequence is QV. NADPH contacts are provided by residues 39–40, 63–65, and Y102; these read DF and AHT. 104–105 contributes to the dTDP-beta-L-rhamnose binding site; sequence TD. Positions 128 and 132 each coordinate NADH. NADPH contacts are provided by Y128 and K132. Catalysis depends on Y128, which acts as the Proton donor/acceptor. W153 contributes to the dTDP-beta-L-rhamnose binding site.

Belongs to the dTDP-4-dehydrorhamnose reductase family. Homodimer. The cofactor is Mg(2+).

It catalyses the reaction dTDP-beta-L-rhamnose + NADP(+) = dTDP-4-dehydro-beta-L-rhamnose + NADPH + H(+). The protein operates within carbohydrate biosynthesis; dTDP-L-rhamnose biosynthesis. It functions in the pathway bacterial outer membrane biogenesis; LPS O-antigen biosynthesis. In terms of biological role, involved in the biosynthesis of the dTDP-L-rhamnose which is an important component of lipopolysaccharide (LPS). Catalyzes the reduction of dTDP-6-deoxy-L-lyxo-4-hexulose to yield dTDP-L-rhamnose. RmlD uses NADH and NADPH nearly equally well. This is dTDP-4-dehydrorhamnose reductase (rfbD) from Salmonella typhimurium (strain LT2 / SGSC1412 / ATCC 700720).